Reading from the N-terminus, the 265-residue chain is Cell division protein FtsQ (265 aa).

Residues 1-13 (MAGATTAKGGARR) are compositionally biased toward low complexity. Residues 1-25 (MAGATTAKGGARRTPPPGPPPPALK) form a disordered region. Residues 1–35 (MAGATTAKGGARRTPPPGPPPPALKARRRLRLPRR) are Cytoplasmic-facing. The span at 14 to 23 (TPPPGPPPPA) shows a compositional bias: pro residues. The helical transmembrane segment at 36–58 (RTLLVTGVATALLGSGVTWLLYG) threads the bilayer. At 59-265 (SSWLRVEQVA…APTAPAVTHS (207 aa)) the chain is on the extracellular side. In terms of domain architecture, POTRA spans 62–131 (LRVEQVAVSG…DTIAVRVTER (70 aa)).

The protein belongs to the FtsQ/DivIB family. FtsQ subfamily.

It localises to the cell membrane. Essential cell division protein. This chain is Cell division protein FtsQ, found in Streptomyces bingchenggensis (strain BCW-1).